We begin with the raw amino-acid sequence, 378 residues long: E3 ubiquitin-protein ligase ATL9 (378 aa).

An N-terminal signal peptide occupies residues 1–33 (MAILDTKSSRWIPHNLLFLLLLLLLQSVPYGFG). Residues 51-71 (VVVVITVLFLVIFFMVFGSIF) traverse the membrane as a helical segment. Residues 135–177 (CAVCLCEFEDDETLRLMPPCCHVFHADCVDVWLSEHSTCPLCR) form an RING-type; atypical zinc finger. Disordered regions lie at residues 187-211 (DDDD…DPER), 300-326 (ARSS…RKSN), and 350-378 (FSGD…DERV). Polar residues predominate over residues 193 to 207 (ESYSGTDPGTISSST). The segment covering 301–317 (RSSRSGYRSGSVGSERS) has biased composition (low complexity). The segment covering 364 to 378 (AGERSFERLRPDERV) has biased composition (basic and acidic residues).

Belongs to the RING-type zinc finger family. ATL subfamily.

The protein localises to the membrane. The catalysed reaction is S-ubiquitinyl-[E2 ubiquitin-conjugating enzyme]-L-cysteine + [acceptor protein]-L-lysine = [E2 ubiquitin-conjugating enzyme]-L-cysteine + N(6)-ubiquitinyl-[acceptor protein]-L-lysine.. It participates in protein modification; protein ubiquitination. Its function is as follows. E3 ubiquitin-protein ligase able to catalyze polyubiquitination with ubiquitin-conjugating enzyme E2 UBC8 in vitro. May be involved in the early steps of the plant defense signaling pathway. This chain is E3 ubiquitin-protein ligase ATL9 (ATL9), found in Arabidopsis thaliana (Mouse-ear cress).